The primary structure comprises 1436 residues: Probable deoxyribonuclease RhsB (1436 aa).

Residues His-16–Thr-42 form a disordered region. 2 helical membrane-spanning segments follow: residues Phe-48–Ala-68 and Val-70–Phe-90. YD repeat units lie at residues Tyr-486–Gly-521, Tyr-569–Gly-605, Tyr-612–Ala-647, Asp-766–Ser-799, and Tyr-847–Ala-879.

Belongs to the RHS/WapA nuclease family.

It is found in the membrane. Its function is as follows. Toxic component of a toxin-immunity protein module, which functions as a cellular contact-dependent growth inhibition (CDI) system. This protein may be a nuclease that is specifically inhibited by its cognate immunity protein RhsBI. Upon expression of the C-terminus (residues 1284-1436) in E.coli growth is inhibited, cells elongate, nucleoids condense and plasmid DNA is degraded; these effects are blocked specifically by cognate immunity protein RshIB. Cell contact is necessary for growth inhibition. The polypeptide is Probable deoxyribonuclease RhsB (rhsB) (Dickeya dadantii (strain 3937) (Erwinia chrysanthemi (strain 3937))).